A 377-amino-acid chain; its full sequence is Succinyl-diaminopimelate desuccinylase (377 aa).

Zn(2+) is bound at residue His68. Asp70 is an active-site residue. Asp101 lines the Zn(2+) pocket. Glu135 acts as the Proton acceptor in catalysis. Zn(2+) contacts are provided by Glu136, Glu164, and His350.

The protein belongs to the peptidase M20A family. DapE subfamily. As to quaternary structure, homodimer. Requires Zn(2+) as cofactor. It depends on Co(2+) as a cofactor.

The catalysed reaction is N-succinyl-(2S,6S)-2,6-diaminopimelate + H2O = (2S,6S)-2,6-diaminopimelate + succinate. The protein operates within amino-acid biosynthesis; L-lysine biosynthesis via DAP pathway; LL-2,6-diaminopimelate from (S)-tetrahydrodipicolinate (succinylase route): step 3/3. Functionally, catalyzes the hydrolysis of N-succinyl-L,L-diaminopimelic acid (SDAP), forming succinate and LL-2,6-diaminopimelate (DAP), an intermediate involved in the bacterial biosynthesis of lysine and meso-diaminopimelic acid, an essential component of bacterial cell walls. The sequence is that of Succinyl-diaminopimelate desuccinylase from Aliivibrio salmonicida (strain LFI1238) (Vibrio salmonicida (strain LFI1238)).